The chain runs to 265 residues: MKPTSQYPQAVPNPPKNSLSDDTLVISSEFIQRLAVLTRKLGYVFNDLSLAKLALTHRSFDSKKNYERLEFLGDALLGMIVGEALYHRYPTQNEGRLTRMRATLVRQESLVIIAQNLELSNQLILGVGERKGGGRNRASILADAVESLIGAIYLDSQDMNITRECVLSWYGDLIDNVNDQKALKDAKSRLQEWLQSKQFDLPHYELMETRGNAPHQLFVVRCQVNIINCPDITESGESRRIAEQKAAELMINQLHKLPGVPKKRR.

One can recognise an RNase III domain in the interval 34–157; it reads LAVLTRKLGY…LIGAIYLDSQ (124 aa). Glu70 provides a ligand contact to Mg(2+). Residue Asp74 is part of the active site. Asp143 and Glu146 together coordinate Mg(2+). Glu146 is a catalytic residue. Residues 185–256 enclose the DRBM domain; sequence DAKSRLQEWL…AELMINQLHK (72 aa).

The protein belongs to the ribonuclease III family. In terms of assembly, homodimer. The cofactor is Mg(2+).

The protein localises to the cytoplasm. It catalyses the reaction Endonucleolytic cleavage to 5'-phosphomonoester.. Functionally, digests double-stranded RNA. Involved in the processing of primary rRNA transcript to yield the immediate precursors to the large and small rRNAs (23S and 16S). Processes some mRNAs, and tRNAs when they are encoded in the rRNA operon. Processes pre-crRNA and tracrRNA of type II CRISPR loci if present in the organism. This Psychrobacter arcticus (strain DSM 17307 / VKM B-2377 / 273-4) protein is Ribonuclease 3.